Reading from the N-terminus, the 94-residue chain is Co-chaperonin GroES (94 aa).

Belongs to the GroES chaperonin family. In terms of assembly, heptamer of 7 subunits arranged in a ring. Interacts with the chaperonin GroEL.

Its subcellular location is the cytoplasm. Together with the chaperonin GroEL, plays an essential role in assisting protein folding. The GroEL-GroES system forms a nano-cage that allows encapsulation of the non-native substrate proteins and provides a physical environment optimized to promote and accelerate protein folding. GroES binds to the apical surface of the GroEL ring, thereby capping the opening of the GroEL channel. This chain is Co-chaperonin GroES, found in Enterococcus faecalis (strain ATCC 700802 / V583).